Here is a 687-residue protein sequence, read N- to C-terminus: DNA-directed RNA polymerase subunit beta' (687 aa).

Residues Cys-69, Cys-71, Cys-87, and Cys-90 each coordinate Zn(2+). The Mg(2+) site is built by Asp-493, Asp-495, and Asp-497.

The protein belongs to the RNA polymerase beta' chain family. RpoC1 subfamily. In terms of assembly, in plastids the minimal PEP RNA polymerase catalytic core is composed of four subunits: alpha, beta, beta', and beta''. When a (nuclear-encoded) sigma factor is associated with the core the holoenzyme is formed, which can initiate transcription. Mg(2+) is required as a cofactor. It depends on Zn(2+) as a cofactor.

The protein localises to the plastid. It localises to the chloroplast. The enzyme catalyses RNA(n) + a ribonucleoside 5'-triphosphate = RNA(n+1) + diphosphate. DNA-dependent RNA polymerase catalyzes the transcription of DNA into RNA using the four ribonucleoside triphosphates as substrates. The polypeptide is DNA-directed RNA polymerase subunit beta' (Angiopteris evecta (Mule's foot fern)).